The sequence spans 271 residues: Aspartate/glutamate leucyltransferase (271 aa).

Belongs to the R-transferase family. Bpt subfamily.

It localises to the cytoplasm. It catalyses the reaction N-terminal L-glutamyl-[protein] + L-leucyl-tRNA(Leu) = N-terminal L-leucyl-L-glutamyl-[protein] + tRNA(Leu) + H(+). The enzyme catalyses N-terminal L-aspartyl-[protein] + L-leucyl-tRNA(Leu) = N-terminal L-leucyl-L-aspartyl-[protein] + tRNA(Leu) + H(+). Its function is as follows. Functions in the N-end rule pathway of protein degradation where it conjugates Leu from its aminoacyl-tRNA to the N-termini of proteins containing an N-terminal aspartate or glutamate. This Acinetobacter baylyi (strain ATCC 33305 / BD413 / ADP1) protein is Aspartate/glutamate leucyltransferase.